Consider the following 235-residue polypeptide: Elongation factor Tu, chloroplastic (235 aa).

The tr-type G domain maps to 1-125 (KNMITGAAQM…AVDEYIPTPV (125 aa)). Position 47–50 (47–50 (NKQD)) interacts with GTP.

Belongs to the TRAFAC class translation factor GTPase superfamily. Classic translation factor GTPase family. EF-Tu/EF-1A subfamily.

It localises to the plastid. The protein resides in the chloroplast. The enzyme catalyses GTP + H2O = GDP + phosphate + H(+). Functionally, GTP hydrolase that promotes the GTP-dependent binding of aminoacyl-tRNA to the A-site of ribosomes during protein biosynthesis. The sequence is that of Elongation factor Tu, chloroplastic (tufA) from Gracilariopsis lemaneiformis (Red alga).